The sequence spans 1377 residues: DNA-directed RNA polymerase subunit beta' (1377 aa).

Zn(2+) contacts are provided by Cys70, Cys72, Cys85, and Cys88. Asp460, Asp462, and Asp464 together coordinate Mg(2+). The Zn(2+) site is built by Cys808, Cys882, Cys889, and Cys892.

It belongs to the RNA polymerase beta' chain family. The RNAP catalytic core consists of 2 alpha, 1 beta, 1 beta' and 1 omega subunit. When a sigma factor is associated with the core the holoenzyme is formed, which can initiate transcription. Mg(2+) serves as cofactor. The cofactor is Zn(2+).

It catalyses the reaction RNA(n) + a ribonucleoside 5'-triphosphate = RNA(n+1) + diphosphate. Functionally, DNA-dependent RNA polymerase catalyzes the transcription of DNA into RNA using the four ribonucleoside triphosphates as substrates. In Geotalea daltonii (strain DSM 22248 / JCM 15807 / FRC-32) (Geobacter daltonii), this protein is DNA-directed RNA polymerase subunit beta'.